The primary structure comprises 307 residues: Coproporphyrin III ferrochelatase (307 aa).

Fe-coproporphyrin III is bound by residues Tyr-12, Arg-29, 45–46 (RY), Ser-53, and Tyr-124. His-181 and Glu-263 together coordinate Fe(2+).

It belongs to the ferrochelatase family.

Its subcellular location is the cytoplasm. The enzyme catalyses Fe-coproporphyrin III + 2 H(+) = coproporphyrin III + Fe(2+). It functions in the pathway porphyrin-containing compound metabolism; protoheme biosynthesis. Functionally, involved in coproporphyrin-dependent heme b biosynthesis. Catalyzes the insertion of ferrous iron into coproporphyrin III to form Fe-coproporphyrin III. The sequence is that of Coproporphyrin III ferrochelatase from Staphylococcus saprophyticus subsp. saprophyticus (strain ATCC 15305 / DSM 20229 / NCIMB 8711 / NCTC 7292 / S-41).